Consider the following 203-residue polypeptide: Apoptosis-associated speck-like protein containing a CARD (203 aa).

Residues 1-91 (MAESFKEHLQ…DDLLRNTGQS (91 aa)) enclose the Pyrin domain. The region spanning 112–203 (VAFSKVNFID…FLMDDLEDAE (92 aa)) is the CARD domain.

In terms of assembly, self-associates (via pyrin and CARD domains). Interacts (via pyrin domain) with caspa (via pyrin domain). Interacts with caspb; the interaction only occurs in the presence of nlrp1. Component of NLRP1 inflammasomes. Inflammasomes are supramolecular complexes that assemble in the cytosol in response to pathogens and other damage-associated signals and play critical roles in innate immunity and inflammation. The NLRP1 inflammasome is composed of the signal sensor nlrp1, and the adapter pycard (asc), which recruit effector pro-inflammatory caspases caspa and/or caspb. The interaction between nlrp1 and pycard is required for the sequential recruitment of caspa and then caspb. Within the complex caspa is preferentially recruited first and this causes the cleavage of pro-il1b into the midformed il1b. This is followed by the recruitment of caspb, which is activated and cleaves the midformed il1b resulting in il1b maturation. Interacts (via pyrin domain) with NLP3X1 (via pyrin domain). Interacts with gbp4. In terms of tissue distribution, expressed in the kidney, intestine and gill. Expressed at low levels in the heart.

It is found in the cytoplasm. The protein localises to the inflammasome. Functions as a key mediator in apoptosis and inflammation. Promotes caspase-mediated apoptosis. Induces proteolytic processing of caspa and caspa-dependent apoptosis. Involved in innate immune response by acting as an integral adapter in the assembly of various inflammasomes which recruit and activate caspase-1 leading to processing and secretion of pro-inflammatory cytokines. Caspase-1-dependent inflammation leads to macrophage pyroptosis, a form of cell death. The function as activating adapter in different types of inflammasomes is mediated by the pyrin and CARD domains and their homotypic interactions. Clustered PYCARD nucleates the formation of caspase-1 filaments through the interaction of their respective CARD domains, acting as a platform for of caspase-1 polymerization. Also involved in transcriptional activation of cytokines and chemokines independent of the inflammasome. The protein is Apoptosis-associated speck-like protein containing a CARD (pycard) of Danio rerio (Zebrafish).